Here is a 1188-residue protein sequence, read N- to C-terminus: NF-X1-type zinc finger protein NFXL1 (1188 aa).

Positions 1 to 15 (MSFQVRRDRSDDRSH) are enriched in basic and acidic residues. Disordered stretches follow at residues 1–52 (MSFQ…ETLD) and 65–195 (QHNA…VAKE). 2 stretches are compositionally biased toward polar residues: residues 19–34 (HQQT…SSVV) and 168–186 (ASGT…TRPV). An RING-type; degenerate zinc finger spans residues 223–279 (CMICYDKVGRSANIWSCSSCYSIFHINCIKRWARAPTSVDLLAEKNQGDNWRCPGCQ). NF-X1-type zinc fingers lie at residues 335 to 353 (CPHV…PCKA), 390 to 409 (CGRH…PCQV), 454 to 473 (CGNH…DCDL), 513 to 532 (CRLH…PCLV), 572 to 607 (CGRH…PCQK), 611 to 630 (CGQH…PCLE), 668 to 686 (CGHS…PCST), 721 to 751 (CGMH…TCRQ), and 760 to 781 (CRHT…RCEF). The 70-residue stretch at 894 to 963 (PKWVLAVEER…KRFTVVHVTA (70 aa)) folds into the R3H domain. The segment at 1100 to 1188 (SDDSWGAEDS…VVDDWEKVCE (89 aa)) is disordered. Polar residues-rich tracts occupy residues 1126–1138 (AKSN…SVNR) and 1159–1169 (EESSSSKTTGK).

Belongs to the NFX1 family. Expressed in seedlings, roots, stems, leaves, buds, flowers and siliques.

It localises to the nucleus. The protein operates within protein modification; protein ubiquitination. Mediates E2-dependent ubiquitination. Confers resistance to osmotic stress such as high salinity. Promotes H(2)O(2) production. Negative regulator of some defense-related genes via an salicylic acid (SA)-dependent signaling pathway. Confers susceptibility to the compatible phytopathogen Pseudomonas syringae pv. tomato strain DC3000 (Pst DC3000). Mediates resistance to type A trichothecenes (phytotoxins produced by phytopathogenic fungi). This chain is NF-X1-type zinc finger protein NFXL1 (NFXL1), found in Arabidopsis thaliana (Mouse-ear cress).